Consider the following 352-residue polypeptide: Ion-translocating oxidoreductase complex subunit D (352 aa).

A run of 4 helical transmembrane segments spans residues 20-40, 42-62, 69-91, and 123-143; these read IMLL…WFFG, GTLF…AIVL, VASH…SIPP, and PAMI…TSWL. Position 187 is an FMN phosphoryl threonine (threonine 187). The next 5 helical transmembrane spans lie at 215-235, 242-262, 267-287, 301-321, and 322-342; these read LAGV…VFLL, WHIP…GWLF, LASP…FFIL, LIFG…GGYP, and DGVA…DYYT.

Belongs to the NqrB/RnfD family. The complex is composed of six subunits: RsxA, RsxB, RsxC, RsxD, RsxE and RsxG. FMN is required as a cofactor.

The protein resides in the cell inner membrane. Its function is as follows. Part of a membrane-bound complex that couples electron transfer with translocation of ions across the membrane. Required to maintain the reduced state of SoxR. In Salmonella agona (strain SL483), this protein is Ion-translocating oxidoreductase complex subunit D.